We begin with the raw amino-acid sequence, 80 residues long: Putative membrane protein insertion efficiency factor (80 aa).

A disordered region spans residues Lys61 to Glu80. Basic and acidic residues predominate over residues Thr62–Glu80.

It belongs to the UPF0161 family.

It localises to the cell membrane. Could be involved in insertion of integral membrane proteins into the membrane. This is Putative membrane protein insertion efficiency factor from Streptococcus pneumoniae (strain CGSP14).